The primary structure comprises 64 residues: Large ribosomal subunit protein bL32 (64 aa).

Positions 1 to 23 are disordered; that stretch reads MAVQKSRVTPSRRGQRRSHDALA.

It belongs to the bacterial ribosomal protein bL32 family.

This is Large ribosomal subunit protein bL32 from Xylella fastidiosa (strain M23).